Here is a 598-residue protein sequence, read N- to C-terminus: Dihydroxy-acid dehydratase, mitochondrial (598 aa).

Residues 1 to 18 (MMFCKLLRCQNGIASKRA) constitute a mitochondrion transit peptide. C84 contacts [2Fe-2S] cluster. D116 is a binding site for Mg(2+). C157 contributes to the [2Fe-2S] cluster binding site. D158 contacts Mg(2+). C232 is a binding site for [2Fe-2S] cluster. E485 lines the Mg(2+) pocket. S511 acts as the Proton acceptor in catalysis.

Belongs to the IlvD/Edd family. Requires [2Fe-2S] cluster as cofactor. Mg(2+) is required as a cofactor.

It localises to the mitochondrion. It catalyses the reaction (2R)-2,3-dihydroxy-3-methylbutanoate = 3-methyl-2-oxobutanoate + H2O. The enzyme catalyses (2R,3R)-2,3-dihydroxy-3-methylpentanoate = (S)-3-methyl-2-oxopentanoate + H2O. It participates in amino-acid biosynthesis; L-isoleucine biosynthesis; L-isoleucine from 2-oxobutanoate: step 3/4. The protein operates within amino-acid biosynthesis; L-valine biosynthesis; L-valine from pyruvate: step 3/4. Functionally, dihydroxyacid dehydratase that catalyzes the third step in the common pathway leading to biosynthesis of branched-chain amino acids. Catalyzes the dehydration of (2R,3R)-2,3-dihydroxy-3-methylpentanoate (2,3-dihydroxy-3-methylvalerate) into 2-oxo-3-methylpentanoate (2-oxo-3-methylvalerate) and of (2R)-2,3-dihydroxy-3-methylbutanoate (2,3-dihydroxyisovalerate) into 2-oxo-3-methylbutanoate (2-oxoisovalerate), the penultimate precursor to L-isoleucine and L-valine, respectively. This Schizosaccharomyces pombe (strain 972 / ATCC 24843) (Fission yeast) protein is Dihydroxy-acid dehydratase, mitochondrial.